Consider the following 206-residue polypeptide: Sclerostin domain-containing protein 1 (206 aa).

The signal sequence occupies residues 1-22 (MLLSAIHFYGLLLACTFTRSYS). Positions 40–68 (APASPSSNSTLNQARNGGRHYAGTGSDRN) are disordered. Over residues 43 to 54 (SPSSNSTLNQAR) the composition is skewed to polar residues. N-linked (GlcNAc...) asparagine glycosylation is present at Asn47. 4 disulfides stabilise this stretch: Cys75–Cys133, Cys89–Cys147, Cys100–Cys163, and Cys104–Cys165. The 96-residue stretch at 75 to 170 (CRELRSTKYI…TACKCKRYTR (96 aa)) folds into the CTCK domain. A glycan (N-linked (GlcNAc...) asparagine) is linked at Asn173. Residues 176–206 (SHNFEGTSQAKPVQHHKERKRASKSSKHSTS) form a disordered region. Basic residues predominate over residues 188–206 (VQHHKERKRASKSSKHSTS).

Belongs to the sclerostin family. As to quaternary structure, interacts with LRP6.

It localises to the secreted. Its function is as follows. Can activate or inhibit Wnt signaling in a context-dependent manner. Activates the canonical Wnt pathway whereby acts through Disheveled proteins and beta-catenin. Antagonises Wnt signaling through the canonical pathways presumably by blocking accessibility of certain WNTs to their receptors. Induces posterior neural markers via components of the canonical Wnt pathway. This Gallus gallus (Chicken) protein is Sclerostin domain-containing protein 1 (SOSTDC1).